We begin with the raw amino-acid sequence, 354 residues long: Histidinol-phosphate aminotransferase (354 aa).

N6-(pyridoxal phosphate)lysine is present on K210.

It belongs to the class-II pyridoxal-phosphate-dependent aminotransferase family. Histidinol-phosphate aminotransferase subfamily. Homodimer. Requires pyridoxal 5'-phosphate as cofactor.

The catalysed reaction is L-histidinol phosphate + 2-oxoglutarate = 3-(imidazol-4-yl)-2-oxopropyl phosphate + L-glutamate. The protein operates within amino-acid biosynthesis; L-histidine biosynthesis; L-histidine from 5-phospho-alpha-D-ribose 1-diphosphate: step 7/9. In Clostridium botulinum (strain Kyoto / Type A2), this protein is Histidinol-phosphate aminotransferase.